Here is a 645-residue protein sequence, read N- to C-terminus: Serine/threonine-protein kinase Nek11 (645 aa).

A Protein kinase domain is found at 29–287 (YVLQQKLGSG…AIEILKIPYL (259 aa)). ATP is bound by residues 35–43 (LGSGSFGTV) and Lys-61. Asp-158 (proton acceptor) is an active-site residue. Ser-273 carries the phosphoserine; by CHEK1 modification. The stretch at 346-385 (RLRKLQAADEKARKLKKIVEEKYEENSKRMQELRSRNFQQ) forms a coiled coil. The segment at 399–445 (GMEEKEEQPEGRLSCSPQDEDEERWQGREEESDEPTLENLPESQPIP) is disordered.

This sequence belongs to the protein kinase superfamily. NEK Ser/Thr protein kinase family. NIMA subfamily. As to quaternary structure, interacts with isoform 1 of NEK2. The cofactor is Mn(2+). Requires Mg(2+) as cofactor. Phosphorylated by NEK2. Phosphorylation at Ser-273 is important for its activation. In terms of tissue distribution, poorly expressed in cerebellum, trachea, lung, appendix, and uterus.

It is found in the nucleus. The protein localises to the nucleolus. The catalysed reaction is L-seryl-[protein] + ATP = O-phospho-L-seryl-[protein] + ADP + H(+). It carries out the reaction L-threonyl-[protein] + ATP = O-phospho-L-threonyl-[protein] + ADP + H(+). Autorepressed by intramolecular binding of the C-terminus which dissociates following phosphorylation by NEK2 isoform 1 in G1/S-arrested cells. NEK2 isoform 2 is largely not present in the nucleolus, and does not appear to phosphorylate NEK11. Activated in response to DNA damage. Inhibited by zinc. Protein kinase which plays an important role in the G2/M checkpoint response to DNA damage. Controls degradation of CDC25A by directly phosphorylating it on residues whose phosphorylation is required for BTRC-mediated polyubiquitination and degradation. In Homo sapiens (Human), this protein is Serine/threonine-protein kinase Nek11.